The following is a 285-amino-acid chain: Nucleotide-binding protein Avin_12760 (285 aa).

8–15 (GRSGSGKS) serves as a coordination point for ATP. 60–63 (DARN) contributes to the GTP binding site.

This sequence belongs to the RapZ-like family.

Functionally, displays ATPase and GTPase activities. This is Nucleotide-binding protein Avin_12760 from Azotobacter vinelandii (strain DJ / ATCC BAA-1303).